The chain runs to 351 residues: C(7)-cyclitol 7-kinase (351 aa).

Belongs to the ROK (NagC/XylR) family.

It catalyses the reaction valienone + ATP = valienone 7-phosphate + ADP + H(+). It carries out the reaction validone + ATP = validone 7-phosphate + ADP + H(+). Functionally, involved in the biosynthesis of the antifungal agent validamycin A. Catalyzes the phosphorylation of valienone and validone to their 7-phosphate derivatives. In Streptomyces hygroscopicus subsp. jinggangensis (strain 5008), this protein is C(7)-cyclitol 7-kinase.